The chain runs to 370 residues: Lipoyl synthase, mitochondrial (370 aa).

Residues Cys104, Cys109, Cys115, Cys135, Cys139, Cys142, and Ser350 each coordinate [4Fe-4S] cluster. Residues 118-339 enclose the Radical SAM core domain; sequence GGDKSKATAT…KQKALELGFL (222 aa).

It belongs to the radical SAM superfamily. Lipoyl synthase family. It depends on [4Fe-4S] cluster as a cofactor.

It is found in the mitochondrion. The catalysed reaction is [[Fe-S] cluster scaffold protein carrying a second [4Fe-4S](2+) cluster] + N(6)-octanoyl-L-lysyl-[protein] + 2 oxidized [2Fe-2S]-[ferredoxin] + 2 S-adenosyl-L-methionine + 4 H(+) = [[Fe-S] cluster scaffold protein] + N(6)-[(R)-dihydrolipoyl]-L-lysyl-[protein] + 4 Fe(3+) + 2 hydrogen sulfide + 2 5'-deoxyadenosine + 2 L-methionine + 2 reduced [2Fe-2S]-[ferredoxin]. It participates in protein modification; protein lipoylation via endogenous pathway; protein N(6)-(lipoyl)lysine from octanoyl-[acyl-carrier-protein]: step 2/2. Catalyzes the radical-mediated insertion of two sulfur atoms into the C-6 and C-8 positions of the octanoyl moiety bound to the lipoyl domains of lipoate-dependent enzymes, thereby converting the octanoylated domains into lipoylated derivatives. The protein is Lipoyl synthase, mitochondrial of Kluyveromyces lactis (strain ATCC 8585 / CBS 2359 / DSM 70799 / NBRC 1267 / NRRL Y-1140 / WM37) (Yeast).